Reading from the N-terminus, the 142-residue chain is ATP synthase epsilon chain, chloroplastic (142 aa).

It belongs to the ATPase epsilon chain family. As to quaternary structure, F-type ATPases have 2 components, CF(1) - the catalytic core - and CF(0) - the membrane proton channel. CF(1) has five subunits: alpha(3), beta(3), gamma(1), delta(1), epsilon(1). CF(0) has three main subunits: a, b and c.

It is found in the plastid. The protein localises to the chloroplast thylakoid membrane. Produces ATP from ADP in the presence of a proton gradient across the membrane. The polypeptide is ATP synthase epsilon chain, chloroplastic (Ostreococcus tauri).